Consider the following 891-residue polypeptide: Fanconi-associated nuclease 1 homolog (891 aa).

E712, D833, E852, and V853 together coordinate Mn(2+). A VRR-NUC domain is found at 770–884; the sequence is GMAEEILIIS…GFNVEICKVR (115 aa).

Belongs to the FAN1 family. It depends on Mn(2+) as a cofactor. Mg(2+) is required as a cofactor.

It localises to the nucleus. It catalyses the reaction Hydrolytically removes 5'-nucleotides successively from the 3'-hydroxy termini of 3'-hydroxy-terminated oligonucleotides.. Its function is as follows. Nuclease required for the repair of DNA interstrand cross-links (ICLs). Acts as a 5'-3' exonuclease that anchors at a cut end of DNA and cleaves DNA successively at every third nucleotide, allowing to excise an ICL from one strand through flanking incisions. May act upstream of the helicase RECQL4A and the ATPase RAD5A, which is involved in error-free post-replicative repair. Functions independently of MUS81 pathway, but in a similar pathway with RECQ4A, RAD5A and MFH1 in ICL repair. This Arabidopsis thaliana (Mouse-ear cress) protein is Fanconi-associated nuclease 1 homolog.